Consider the following 74-residue polypeptide: U3-agatoxin-Ao1b (74 aa).

Positions 1-20 (MKAAISLIIFFAILFVVIEA) are cleaved as a signal peptide. The propeptide occupies 21 to 34 (ISYEEGKELFQKER). 4 cysteine pairs are disulfide-bonded: Cys37–Cys53, Cys44–Cys58, Cys52–Cys68, and Cys60–Cys66. Ser72 is subject to Serine amide.

The protein belongs to the neurotoxin 07 (Beta/delta-agtx) family. 02 (aga-3) subfamily. As to expression, expressed by the venom gland.

It is found in the secreted. Its function is as follows. Insecticidal neurotoxin that induces an irreversible spastic paralysis when injected into insects. Modifies presynaptic voltage-gated sodium channels (Nav), causing them to open at the normal resting potential of the nerve. This leads to spontaneous release of neurotransmitter and repetitive action potentials in motor neurons. In Agelena orientalis (Funnel-web spider), this protein is U3-agatoxin-Ao1b.